We begin with the raw amino-acid sequence, 156 residues long: Arginine repressor (156 aa).

The protein belongs to the ArgR family.

It localises to the cytoplasm. It functions in the pathway amino-acid biosynthesis; L-arginine biosynthesis [regulation]. Functionally, regulates arginine biosynthesis genes. The chain is Arginine repressor from Cronobacter sakazakii (strain ATCC BAA-894) (Enterobacter sakazakii).